The following is a 355-amino-acid chain: Protein pelota homolog (355 aa).

This sequence belongs to the eukaryotic release factor 1 family. Pelota subfamily. As to quaternary structure, monomer. It depends on a divalent metal cation as a cofactor.

It is found in the cytoplasm. Functionally, may function in recognizing stalled ribosomes, interact with stem-loop structures in stalled mRNA molecules, and effect endonucleolytic cleavage of the mRNA. May play a role in the release non-functional ribosomes and degradation of damaged mRNAs. Has endoribonuclease activity. The chain is Protein pelota homolog from Haloarcula marismortui (strain ATCC 43049 / DSM 3752 / JCM 8966 / VKM B-1809) (Halobacterium marismortui).